The sequence spans 238 residues: Putative pectate lyase X (238 aa).

The N-terminal stretch at 1–22 (MKYLLPTAAAGLLLLAAQPAMA) is a signal peptide. D153, E188, and D192 together coordinate Ca(2+).

The protein belongs to the polysaccharide lyase 1 family. Requires Ca(2+) as cofactor.

The enzyme catalyses Eliminative cleavage of (1-&gt;4)-alpha-D-galacturonan to give oligosaccharides with 4-deoxy-alpha-D-galact-4-enuronosyl groups at their non-reducing ends.. Its pathway is glycan metabolism; pectin degradation; 2-dehydro-3-deoxy-D-gluconate from pectin: step 2/5. In terms of biological role, involved in maceration and soft-rotting of plant tissue. The sequence is that of Putative pectate lyase X (PEL X) from Pectobacterium carotovorum (Erwinia carotovora).